Consider the following 310-residue polypeptide: Methionyl-tRNA formyltransferase (310 aa).

Position 111–114 (111–114) interacts with (6S)-5,6,7,8-tetrahydrofolate; the sequence is SLLP.

This sequence belongs to the Fmt family.

It carries out the reaction L-methionyl-tRNA(fMet) + (6R)-10-formyltetrahydrofolate = N-formyl-L-methionyl-tRNA(fMet) + (6S)-5,6,7,8-tetrahydrofolate + H(+). Functionally, attaches a formyl group to the free amino group of methionyl-tRNA(fMet). The formyl group appears to play a dual role in the initiator identity of N-formylmethionyl-tRNA by promoting its recognition by IF2 and preventing the misappropriation of this tRNA by the elongation apparatus. The polypeptide is Methionyl-tRNA formyltransferase (Nitrobacter hamburgensis (strain DSM 10229 / NCIMB 13809 / X14)).